Consider the following 287-residue polypeptide: Protease HtpX (287 aa).

Transmembrane regions (helical) follow at residues 4 to 24 (IFLL…VMSI) and 33 to 53 (GGLL…SLAI). Residue His139 participates in Zn(2+) binding. The active site involves Glu140. Position 143 (His143) interacts with Zn(2+). The next 2 helical transmembrane spans lie at 154–174 (LIQG…AGII) and 195–215 (AVVF…VAYF). Residue Glu220 coordinates Zn(2+).

Belongs to the peptidase M48B family. It depends on Zn(2+) as a cofactor.

Its subcellular location is the cell inner membrane. In Shewanella baltica (strain OS223), this protein is Protease HtpX.